A 665-amino-acid polypeptide reads, in one-letter code: RNA-directed RNA polymerase (665 aa).

The catalysed reaction is RNA(n) + a ribonucleoside 5'-triphosphate = RNA(n+1) + diphosphate. Its function is as follows. RNA-dependent RNA polymerase which replicates the viral genome. This is RNA-directed RNA polymerase from Atkinsonella hypoxylon (AhV).